The following is a 104-amino-acid chain: Phosphoribosyl-ATP pyrophosphatase (104 aa).

The protein belongs to the PRA-PH family.

The protein localises to the cytoplasm. The catalysed reaction is 1-(5-phospho-beta-D-ribosyl)-ATP + H2O = 1-(5-phospho-beta-D-ribosyl)-5'-AMP + diphosphate + H(+). The protein operates within amino-acid biosynthesis; L-histidine biosynthesis; L-histidine from 5-phospho-alpha-D-ribose 1-diphosphate: step 2/9. The chain is Phosphoribosyl-ATP pyrophosphatase from Methanosarcina barkeri (strain Fusaro / DSM 804).